Reading from the N-terminus, the 714-residue chain is Polyribonucleotide nucleotidyltransferase (714 aa).

The Mg(2+) site is built by Asp488 and Asp494. A KH domain is found at 555 to 614; that stretch reads PRIEVMNIPTDKIRDVIGSGGKVIREIVEKTGAKINIEDDGTVKIASSNGKEIEAAKKWI. Residues 624–692 form the S1 motif domain; that stretch reads GEIYEGTVVK…ERGKVRLSMK (69 aa).

The protein belongs to the polyribonucleotide nucleotidyltransferase family. It depends on Mg(2+) as a cofactor.

It localises to the cytoplasm. It catalyses the reaction RNA(n+1) + phosphate = RNA(n) + a ribonucleoside 5'-diphosphate. Functionally, involved in mRNA degradation. Catalyzes the phosphorolysis of single-stranded polyribonucleotides processively in the 3'- to 5'-direction. This is Polyribonucleotide nucleotidyltransferase from Brucella melitensis biotype 2 (strain ATCC 23457).